We begin with the raw amino-acid sequence, 450 residues long: UDP-N-acetylmuramoylalanine--D-glutamate ligase (450 aa).

An ATP-binding site is contributed by 119 to 125; the sequence is GSNGKTT.

It belongs to the MurCDEF family.

The protein localises to the cytoplasm. The enzyme catalyses UDP-N-acetyl-alpha-D-muramoyl-L-alanine + D-glutamate + ATP = UDP-N-acetyl-alpha-D-muramoyl-L-alanyl-D-glutamate + ADP + phosphate + H(+). The protein operates within cell wall biogenesis; peptidoglycan biosynthesis. Its function is as follows. Cell wall formation. Catalyzes the addition of glutamate to the nucleotide precursor UDP-N-acetylmuramoyl-L-alanine (UMA). The protein is UDP-N-acetylmuramoylalanine--D-glutamate ligase of Bacillus thuringiensis (strain Al Hakam).